A 490-amino-acid chain; its full sequence is MSRFGLQKLYINGAYVDSTDGKTFNAVNPANGEVLAEIQSASAEDVNRAVASAASGQKVWAAMTAMARSRILRRAVDILRERNDELAALETLDTGKAMSETTAVDIVTGADVLEYYAGLIPSIEGQQIPLRDTSFVYTRREPLGVVAGIGAWNYPIQIALWKSAPALAAGNAMIFKPSEVTSLTALKLAEIYTEAGLPDGVFNVVTGSGAEVGQYLTDHPGIAKVSFTGGVKTGKKVMANASGSTLKEVTMELGGKSPLIIFDDADLDRAADIAMMANFYSSGQVCTNGTRVFVPAALQAQFEAKILERVKRIRLGDPTDPQTNFGPLVSFAHMESVLRFIESGKNSGARLLCGGERVTEGEFAKGAYVAPTVFTDCRDEMEIVREEIFGPVMSILSYQSEEEVVRRANDTTFGLAAGVVTNDLTRAHRVIHQLEAGICWINTWGESAAEMPVGGYKQSGVGRENGLMTLEHYTQIKSVQVELGEYASVF.

Asp93 contributes to the K(+) binding site. An NAD(+)-binding site is contributed by 150–152 (GAW). The Charge relay system role is filled by Lys162. An NAD(+)-binding site is contributed by 176 to 179 (KPSE). Val180 serves as a coordination point for K(+). Residue 230–233 (GVKT) coordinates NAD(+). Leu246 provides a ligand contact to K(+). Catalysis depends on Glu252, which acts as the Proton acceptor. Gly254, Cys286, and Glu387 together coordinate NAD(+). The Nucleophile role is filled by Cys286. Cys286 is modified (cysteine sulfenic acid (-SOH)). Positions 457 and 460 each coordinate K(+). Glu464 acts as the Charge relay system in catalysis.

This sequence belongs to the aldehyde dehydrogenase family. As to quaternary structure, dimer of dimers. Requires K(+) as cofactor.

The catalysed reaction is betaine aldehyde + NAD(+) + H2O = glycine betaine + NADH + 2 H(+). Its pathway is amine and polyamine biosynthesis; betaine biosynthesis via choline pathway; betaine from betaine aldehyde: step 1/1. In terms of biological role, involved in the biosynthesis of the osmoprotectant glycine betaine. Catalyzes the irreversible oxidation of betaine aldehyde to the corresponding acid. In Serratia proteamaculans (strain 568), this protein is Betaine aldehyde dehydrogenase.